The following is a 954-amino-acid chain: Kinesin-like protein KIN-14A (954 aa).

One can recognise a Calponin-homology (CH) domain in the interval 24–142 (ALRRHQAATW…CVISLKSYHE (119 aa)). Residues 242 to 293 (LSRQLEKEQSSNSQVENRRRLLQAQESELLELKSMFQEVKIDFRTLKTQFQD) adopt a coiled-coil conformation. Residues 332–651 (NIRVFCRIRP…LKFAQRASCV (320 aa)) enclose the Kinesin motor domain. 413 to 420 (GQTGSGKT) provides a ligand contact to ATP. Residues 656 to 692 (AHANKESNEIRELKEQVENLKRALAAKELEKSSFKLK) adopt a coiled-coil conformation. Positions 697-709 (VRERAKQVPERTP) are enriched in basic and acidic residues. Disordered regions lie at residues 697-743 (VRER…TKLN), 824-858 (NLEV…RKSI), and 882-954 (PAKI…KRWL). 2 stretches are compositionally biased toward polar residues: residues 831–849 (DEPS…NATK) and 886–898 (ANST…SSIT).

The protein belongs to the TRAFAC class myosin-kinesin ATPase superfamily. Kinesin family. KIN-14 subfamily.

The polypeptide is Kinesin-like protein KIN-14A (Oryza sativa subsp. japonica (Rice)).